The chain runs to 657 residues: Acetyl-coenzyme A synthetase (657 aa).

Residues 192-195 and threonine 311 each bind CoA; that span reads RRGK. Residues 387–389, 411–416, aspartate 504, arginine 519, and arginine 530 contribute to the ATP site; these read GEP and DTWWQT. Mg(2+)-binding residues include histidine 543 and valine 546. Arginine 592 lines the CoA pocket. Lysine 617 is subject to N6-acetyllysine.

It belongs to the ATP-dependent AMP-binding enzyme family. Requires Mg(2+) as cofactor. Post-translationally, acetylated. Deacetylation by the SIR2-homolog deacetylase activates the enzyme.

The enzyme catalyses acetate + ATP + CoA = acetyl-CoA + AMP + diphosphate. Catalyzes the conversion of acetate into acetyl-CoA (AcCoA), an essential intermediate at the junction of anabolic and catabolic pathways. AcsA undergoes a two-step reaction. In the first half reaction, AcsA combines acetate with ATP to form acetyl-adenylate (AcAMP) intermediate. In the second half reaction, it can then transfer the acetyl group from AcAMP to the sulfhydryl group of CoA, forming the product AcCoA. The polypeptide is Acetyl-coenzyme A synthetase (Campylobacter jejuni subsp. jejuni serotype O:6 (strain 81116 / NCTC 11828)).